Reading from the N-terminus, the 290-residue chain is Syntaxin-1A (290 aa).

The disordered stretch occupies residues 1-21 (MTKDRLAALQAAQSDDEDMPE). The Cytoplasmic segment spans residues 1 to 267 (MTKDRLAALQ…KYQSKARRKK (267 aa)). The t-SNARE coiled-coil homology domain occupies 194–256 (LADIEARHAD…QTATQDTKKA (63 aa)). Residues 268-289 (IWIAICVLIAIIILVVFLAIYL) traverse the membrane as a helical; Anchor for type IV membrane protein segment. Residue Thr290 is a topological domain, vesicular.

The protein belongs to the syntaxin family. In terms of processing, (Microbial infection) Targeted and hydrolyzed by the light chain (LC) of P.bifermentans PMP1. Cleavage probably inhibits neurotransmitter release.

It is found in the cytoplasmic vesicle. Its subcellular location is the secretory vesicle. The protein resides in the synaptic vesicle membrane. Plays a critical role in several secretory processes. The sequence is that of Syntaxin-1A from Anopheles gambiae (African malaria mosquito).